We begin with the raw amino-acid sequence, 268 residues long: tRNA pseudouridine synthase A (268 aa).

Catalysis depends on D52, which acts as the Nucleophile. Substrate is bound at residue Y110.

The protein belongs to the tRNA pseudouridine synthase TruA family. Homodimer.

It carries out the reaction uridine(38/39/40) in tRNA = pseudouridine(38/39/40) in tRNA. Its function is as follows. Formation of pseudouridine at positions 38, 39 and 40 in the anticodon stem and loop of transfer RNAs. The chain is tRNA pseudouridine synthase A from Prochlorococcus marinus subsp. pastoris (strain CCMP1986 / NIES-2087 / MED4).